A 171-amino-acid polypeptide reads, in one-letter code: Large ribosomal subunit protein uL10 (171 aa).

Belongs to the universal ribosomal protein uL10 family. In terms of assembly, part of the ribosomal stalk of the 50S ribosomal subunit. The N-terminus interacts with L11 and the large rRNA to form the base of the stalk. The C-terminus forms an elongated spine to which L12 dimers bind in a sequential fashion forming a multimeric L10(L12)X complex.

Forms part of the ribosomal stalk, playing a central role in the interaction of the ribosome with GTP-bound translation factors. This is Large ribosomal subunit protein uL10 from Corynebacterium glutamicum (strain ATCC 13032 / DSM 20300 / JCM 1318 / BCRC 11384 / CCUG 27702 / LMG 3730 / NBRC 12168 / NCIMB 10025 / NRRL B-2784 / 534).